Reading from the N-terminus, the 144-residue chain is uncharacterized protein (144 aa).

A signal peptide spans 1-23 (MVIPLRNKYGILFLIAVCIMVSG). Positions 119 to 144 (QNGQRKTMTRIESKTGREEKDEKSKS) are disordered. The segment covering 127–144 (TRIESKTGREEKDEKSKS) has biased composition (basic and acidic residues).

This is an uncharacterized protein from Bacillus subtilis (strain 168).